The following is a 104-amino-acid chain: Glutaredoxin-C15 (104 aa).

A Glutaredoxin domain is found at 1-103 (MERVAKLSTE…PMLKAAGAIW (103 aa)). Cys21 and Cys24 are disulfide-bonded.

This sequence belongs to the glutaredoxin family. CC-type subfamily.

The protein localises to the cytoplasm. Its function is as follows. Has a glutathione-disulfide oxidoreductase activity in the presence of NADPH and glutathione reductase. Reduces low molecular weight disulfides and proteins. The chain is Glutaredoxin-C15 (GRXC15) from Oryza sativa subsp. japonica (Rice).